Consider the following 115-residue polypeptide: Aspartate 1-decarboxylase (115 aa).

The active-site Schiff-base intermediate with substrate; via pyruvic acid is S25. Residue S25 is modified to Pyruvic acid (Ser). T57 contributes to the substrate binding site. The Proton donor role is filled by Y58. 73–75 is a binding site for substrate; that stretch reads GAA.

The protein belongs to the PanD family. Heterooctamer of four alpha and four beta subunits. Requires pyruvate as cofactor. In terms of processing, is synthesized initially as an inactive proenzyme, which is activated by self-cleavage at a specific serine bond to produce a beta-subunit with a hydroxyl group at its C-terminus and an alpha-subunit with a pyruvoyl group at its N-terminus.

The protein resides in the cytoplasm. It catalyses the reaction L-aspartate + H(+) = beta-alanine + CO2. The protein operates within cofactor biosynthesis; (R)-pantothenate biosynthesis; beta-alanine from L-aspartate: step 1/1. Functionally, catalyzes the pyruvoyl-dependent decarboxylation of aspartate to produce beta-alanine. This chain is Aspartate 1-decarboxylase, found in Kosmotoga olearia (strain ATCC BAA-1733 / DSM 21960 / TBF 19.5.1).